The primary structure comprises 130 residues: Holo-[acyl-carrier-protein] synthase (130 aa).

The Mg(2+) site is built by D8 and E62.

Belongs to the P-Pant transferase superfamily. AcpS family. Mg(2+) serves as cofactor.

The protein resides in the cytoplasm. The catalysed reaction is apo-[ACP] + CoA = holo-[ACP] + adenosine 3',5'-bisphosphate + H(+). In terms of biological role, transfers the 4'-phosphopantetheine moiety from coenzyme A to a Ser of acyl-carrier-protein. This chain is Holo-[acyl-carrier-protein] synthase, found in Polynucleobacter asymbioticus (strain DSM 18221 / CIP 109841 / QLW-P1DMWA-1) (Polynucleobacter necessarius subsp. asymbioticus).